A 358-amino-acid chain; its full sequence is Peptide chain release factor 1 (358 aa).

N5-methylglutamine is present on Q233.

Belongs to the prokaryotic/mitochondrial release factor family. Methylated by PrmC. Methylation increases the termination efficiency of RF1.

It is found in the cytoplasm. Functionally, peptide chain release factor 1 directs the termination of translation in response to the peptide chain termination codons UAG and UAA. The sequence is that of Peptide chain release factor 1 from Listeria monocytogenes serovar 1/2a (strain ATCC BAA-679 / EGD-e).